The chain runs to 738 residues: MDFNRSFTSNLGSAGSAKSQQSMFKALRRLHGQNLESRGLHDMTEAFQSFVTRARFFSIGKLRRTWSHSAAEFMKYRRLLPMLLADGDAFDGGETDDFDASIAFQHTSRDDRKIVVSNISAKVTQSQLQSFFSQYGKITSCILPREEKKTSVFGTLPKHSRNCGTATITFKKSEHADRAKNANPEELKFYDQVMVVSAYVSKKRGGKGLVLSDDVGSREDTPLSRASSTQSLASGSEQSFNLGNVPDKILRRVISFLPIHETIRLERVNKKFMEESIKSWELVNKIALARETVFNKQRPMRTSHLKAILTRAGAHLRSLDVSGIVHLLDDRRALKVIATCCPNLVDLDISGTHAQAEALEELGESLSHLEQLSYRGMETTGDKAFYFLLKNCGHSLKFVDLRNSKRLHGRSFKLFGSQLESLYLDGSSKVDEMAFEDLCTSCGGLKELRINECYKITDENLSMIARRMEDLSILTLCGDGFKSLTSAGLIHISHMRNITELALDYNALVNDELLISISAGLPLLSSLSLANAGNDSSITAEGVSAIKNLKELTQLDASSLAAVNSKVLEQLGSLKKLEIIQLRNCTYLGDDGVRAKLRMPNIRHVDLSGSILVSNDSIQQFIKAFPSGPKLPPITLVVGGTAADASKLSVRGSRVVVDFSDYSTIVTMQTSQCSSSKFAIGGSASDAEGSDDEFEALTAQRSFYIDAVCGEEESPITDDGKLAEWAEKEARSLGLIKD.

Residues 112 to 201 (RKIVVSNISA…QVMVVSAYVS (90 aa)) enclose the RRM domain. Positions 211-237 (LSDDVGSREDTPLSRASSTQSLASGSE) are disordered. Positions 224–237 (SRASSTQSLASGSE) are enriched in polar residues. An F-box domain is found at 239 to 297 (SFNLGNVPDKILRRVISFLPIHETIRLERVNKKFMEESIKSWELVNKIALARETVFNKQ).

In Caenorhabditis elegans, this protein is Putative RNA-binding protein EEED8.10.